The following is a 374-amino-acid chain: Tuliposide A-converting enzyme b3, amyloplastic (374 aa).

The N-terminal 68 residues, 1-68 (MSAALFCGPP…TNSSLSPSPT (68 aa)), are a transit peptide targeting the amyloplast. Serine 226 (acyl-ester intermediate) is an active-site residue. Residues aspartate 316 and histidine 348 each act as charge relay system in the active site.

The protein belongs to the AB hydrolase superfamily. As to quaternary structure, homodimer. In terms of tissue distribution, highly expressed in pistil and bulb scales. Lower expression in stem, and barely detected in root, leaf, petal and stamen.

The protein localises to the plastid. Its subcellular location is the amyloplast. The catalysed reaction is 6-tuliposide A = tulipalin A + D-glucose. Functionally, lactone-forming carboxylesterases, specifically catalyzing intramolecular transesterification, but not hydrolysis. Involved in the biosynthesis of tulipalins, defensive chemicals that show antimicrobial activities against a broad range of strains of bacteria and fungi. Substrates are 6-tuliposide A &gt; 6-tuliposide B. The polypeptide is Tuliposide A-converting enzyme b3, amyloplastic (TCEA-B3) (Tulipa gesneriana (Garden tulip)).